The chain runs to 227 residues: PKHD-type hydroxylase ABSDF3031 (227 aa).

The 101-residue stretch at 78–178 (KIIPPLFNRY…RFASFFWVQS (101 aa)) folds into the Fe2OG dioxygenase domain. 3 residues coordinate Fe cation: H96, D98, and H159. Position 169 (R169) interacts with 2-oxoglutarate.

The cofactor is Fe(2+). Requires L-ascorbate as cofactor.

In Acinetobacter baumannii (strain SDF), this protein is PKHD-type hydroxylase ABSDF3031.